We begin with the raw amino-acid sequence, 23 residues long: Protein male-specific 40 (23 aa).

During early embryogenesis expression is initially detected at the early cleavage stages in the nucleus of two discrete cells. Subsequently, expression is abundant in the cytoplasm of the newly formed pole cells. Male-specific expression during the third larval instar.

It is found in the cytoplasm. Its subcellular location is the nucleus. The polypeptide is Protein male-specific 40 (Drosophila melanogaster (Fruit fly)).